The chain runs to 360 residues: Phenylalanine--tRNA ligase alpha subunit (360 aa).

Glutamate 260 is a binding site for Mg(2+).

Belongs to the class-II aminoacyl-tRNA synthetase family. Phe-tRNA synthetase alpha subunit type 1 subfamily. In terms of assembly, tetramer of two alpha and two beta subunits. Mg(2+) is required as a cofactor.

It is found in the cytoplasm. It carries out the reaction tRNA(Phe) + L-phenylalanine + ATP = L-phenylalanyl-tRNA(Phe) + AMP + diphosphate + H(+). This chain is Phenylalanine--tRNA ligase alpha subunit, found in Beijerinckia indica subsp. indica (strain ATCC 9039 / DSM 1715 / NCIMB 8712).